We begin with the raw amino-acid sequence, 473 residues long: Catalase easC (473 aa).

Residues 1–15 (MASEVSVASSGSEHS) show a composition bias toward low complexity. The segment at 1–31 (MASEVSVASSGSEHSGAQKCPFQDPGLSSMD) is disordered. H54 is a catalytic residue. Residue Y344 coordinates heme. The tract at residues 369 to 388 (DGARPEKAEMAPQKVPSQEH) is disordered.

Belongs to the catalase family. Heme is required as a cofactor.

The protein operates within alkaloid biosynthesis; ergot alkaloid biosynthesis. Functionally, catalase; part of the gene cluster that mediates the biosynthesis of fungal ergot alkaloid. DmaW catalyzes the first step of ergot alkaloid biosynthesis by condensing dimethylallyl diphosphate (DMAP) and tryptophan to form 4-dimethylallyl-L-tryptophan. The second step is catalyzed by the methyltransferase easF that methylates 4-dimethylallyl-L-tryptophan in the presence of S-adenosyl-L-methionine, resulting in the formation of 4-dimethylallyl-L-abrine. The catalase easC and the FAD-dependent oxidoreductase easE then transform 4-dimethylallyl-L-abrine to chanoclavine-I which is further oxidized by easD in the presence of NAD(+), resulting in the formation of chanoclavine-I aldehyde. Agroclavine dehydrogenase easG then mediates the conversion of chanoclavine-I aldehyde to agroclavine via a non-enzymatic adduct reaction: the substrate is an iminium intermediate that is formed spontaneously from chanoclavine-I aldehyde in the presence of glutathione. The presence of easA is not required to complete this reaction. Further conversion of agroclavine to paspalic acid is a two-step process involving oxidation of agroclavine to elymoclavine and of elymoclavine to paspalic acid, the second step being performed by the elymoclavine oxidase cloA. Paspalic acid is then further converted to D-lysergic acid. Ergopeptines are assembled from D-lysergic acid and three different amino acids by the D-lysergyl-peptide-synthetases composed each of a monomudular and a trimodular nonribosomal peptide synthetase subunit. LpsB and lpsC encode the monomodular subunits responsible for D-lysergic acid activation and incorporation into the ergopeptine backbone. LpsA1 and A2 subunits encode the trimodular nonribosomal peptide synthetase assembling the tripeptide portion of ergopeptines. LpsA1 is responsible for formation of the major ergopeptine, ergotamine, and lpsA2 for alpha-ergocryptine, the minor ergopeptine of the total alkaloid mixture elaborated by C.purpurea. D-lysergyl-tripeptides are assembled by the nonribosomal peptide synthetases and released as N-(D-lysergyl-aminoacyl)-lactams. Cyclolization of the D-lysergyl-tripeptides is performed by the Fe(2+)/2-ketoglutarate-dependent dioxygenase easH which introduces a hydroxyl group into N-(D-lysergyl-aminoacyl)-lactam at alpha-C of the aminoacyl residue followed by spontaneous condensation with the terminal lactam carbonyl group. The protein is Catalase easC of Claviceps purpurea (Ergot fungus).